The chain runs to 276 residues: Energy-coupling factor transporter ATP-binding protein EcfA1 (276 aa).

The region spanning 2-237 (IEIKNLKFKY…GSELVDLGLD (236 aa)) is the ABC transporter domain. 37–44 (GHNGSGKS) contacts ATP.

It belongs to the ABC transporter superfamily. Energy-coupling factor EcfA family. As to quaternary structure, forms a stable energy-coupling factor (ECF) transporter complex composed of 2 membrane-embedded substrate-binding proteins (S component), 2 ATP-binding proteins (A component) and 2 transmembrane proteins (T component).

It is found in the cell membrane. Functionally, ATP-binding (A) component of a common energy-coupling factor (ECF) ABC-transporter complex. Unlike classic ABC transporters this ECF transporter provides the energy necessary to transport a number of different substrates. This Streptococcus thermophilus (strain ATCC BAA-491 / LMD-9) protein is Energy-coupling factor transporter ATP-binding protein EcfA1.